A 78-amino-acid chain; its full sequence is Large ribosomal subunit protein bL31 (78 aa).

This sequence belongs to the bacterial ribosomal protein bL31 family. Type A subfamily. Part of the 50S ribosomal subunit.

Its function is as follows. Binds the 23S rRNA. This chain is Large ribosomal subunit protein bL31, found in Rickettsia prowazekii (strain Madrid E).